The following is a 1049-amino-acid chain: Tegument protein pp150 (1049 aa).

Disordered regions lie at residues Glu-397–Phe-549 and Pro-659–Val-945. Over residues Ala-428–Glu-439 the composition is skewed to acidic residues. The span at Ser-452 to Val-462 shows a compositional bias: gly residues. A compositionally biased stretch (low complexity) spans Ser-463–Ser-474. Positions Gln-475–Arg-490 are enriched in polar residues. Residues Val-509–Gly-525 show a composition bias toward basic and acidic residues. The span at Thr-672–Thr-688 shows a compositional bias: low complexity. Residues Pro-710–Ser-722 are compositionally biased toward acidic residues. The segment covering Gly-731–Val-743 has biased composition (polar residues). The span at Ser-745 to Ser-757 shows a compositional bias: low complexity. Composition is skewed to polar residues over residues Ser-766 to Lys-776, Arg-791 to Val-800, and Val-808 to Val-835. 4 stretches are compositionally biased toward low complexity: residues Thr-836 to Ser-855, Ser-866 to Lys-884, Val-912 to Arg-928, and Ala-936 to Val-945. The O-linked (GlcNAc) serine; by host glycan is linked to Ser-922. Residue Ser-953 is glycosylated (O-linked (GlcNAc) serine; by host). The disordered stretch occupies residues Asp-1006–Asp-1032. Residues Ser-1008–Gln-1018 show a composition bias toward polar residues.

It belongs to the herpesviridae large structural phosphoprotein family. In terms of assembly, interacts with host BICD1 and RAB6A. Interacts with small capsid protein UL48A; this interaction links together the capsid and pp150. Interacts with host CCNA2. Post-translationally, phosphorylated by host CCNA2.

It localises to the virion tegument. The protein resides in the host cytoplasm. Its subcellular location is the host nucleus. Its function is as follows. Participates in the last steps of viral maturation and release. Associates with nuclear capsids prior to DNA encapsidation and later preserves the integrity of nucleocapsids through secondary envelopment at the assembly compartment. Interacts with host CCNA2 and thereby blocks the onset of lytic gene expression to promote establishment of a quiescent state of infection in undifferentiated cells. The sequence is that of Tegument protein pp150 (UL32) from Homo sapiens (Human).